A 318-amino-acid chain; its full sequence is ZAR1-like protein (318 aa).

Residues 149–211 (LSDPPEAGQP…PVDSSQPLGR (63 aa)) form a disordered region. A compositionally biased stretch (pro residues) spans 155 to 169 (AGQPPPPLPPPSPPP). The 3CxxC-type zinc-finger motif lies at 219–304 (PKYGYFHCKD…QELCGRCKDK (86 aa)).

This sequence belongs to the ZAR1 family. In terms of assembly, interacts with YBX2.

It localises to the cytoplasm. The protein localises to the cytoplasmic ribonucleoprotein granule. Functionally, mRNA-binding protein required for maternal mRNA storage, translation and degradation during oocyte maturation. Probably promotes formation of some phase-separated membraneless compartment that stores maternal mRNAs in oocytes: acts by undergoing liquid-liquid phase separation upon binding to maternal mRNAs. Binds to the 3'-UTR of maternal mRNAs, inhibiting their translation. The protein is ZAR1-like protein (ZAR1L) of Bos taurus (Bovine).